A 346-amino-acid chain; its full sequence is ATP-dependent 6-phosphofructokinase (346 aa).

Residues Gly-13, 76-77 (RL), and 106-109 (GEGT) contribute to the ATP site. Glu-107 contacts Mg(2+). Substrate-binding positions include 129-131 (TID), Arg-166, 173-175 (MGR), Glu-226, Arg-270, and 276-279 (HIQR). Asp-131 (proton acceptor) is an active-site residue.

It belongs to the phosphofructokinase type A (PFKA) family. Mixed-substrate PFK group III subfamily. As to quaternary structure, homodimer or homotetramer. It depends on Mg(2+) as a cofactor.

The protein localises to the cytoplasm. The enzyme catalyses beta-D-fructose 6-phosphate + ATP = beta-D-fructose 1,6-bisphosphate + ADP + H(+). Its pathway is carbohydrate degradation; glycolysis; D-glyceraldehyde 3-phosphate and glycerone phosphate from D-glucose: step 3/4. In terms of biological role, catalyzes the phosphorylation of D-fructose 6-phosphate to fructose 1,6-bisphosphate by ATP, the first committing step of glycolysis. The chain is ATP-dependent 6-phosphofructokinase from Corynebacterium efficiens (strain DSM 44549 / YS-314 / AJ 12310 / JCM 11189 / NBRC 100395).